A 1180-amino-acid chain; its full sequence is DNA-directed RNA polymerase subunit beta' (1180 aa).

Positions 60, 62, 75, and 78 each coordinate Zn(2+). Positions 449, 451, and 453 each coordinate Mg(2+). Zn(2+) contacts are provided by Cys-792, Cys-872, Cys-879, and Cys-882.

Belongs to the RNA polymerase beta' chain family. In terms of assembly, the RNAP catalytic core consists of 2 alpha, 1 beta, 1 beta' and 1 omega subunit. When a sigma factor is associated with the core the holoenzyme is formed, which can initiate transcription. Mg(2+) serves as cofactor. Zn(2+) is required as a cofactor.

The catalysed reaction is RNA(n) + a ribonucleoside 5'-triphosphate = RNA(n+1) + diphosphate. DNA-dependent RNA polymerase catalyzes the transcription of DNA into RNA using the four ribonucleoside triphosphates as substrates. This is DNA-directed RNA polymerase subunit beta' from Heliobacterium modesticaldum (strain ATCC 51547 / Ice1).